A 175-amino-acid chain; its full sequence is Peptide deformylase (175 aa).

Residues Cys-99 and His-141 each contribute to the Fe cation site. Glu-142 is a catalytic residue. His-145 contacts Fe cation.

It belongs to the polypeptide deformylase family. Requires Fe(2+) as cofactor.

The catalysed reaction is N-terminal N-formyl-L-methionyl-[peptide] + H2O = N-terminal L-methionyl-[peptide] + formate. Functionally, removes the formyl group from the N-terminal Met of newly synthesized proteins. Requires at least a dipeptide for an efficient rate of reaction. N-terminal L-methionine is a prerequisite for activity but the enzyme has broad specificity at other positions. This chain is Peptide deformylase, found in Rickettsia akari (strain Hartford).